Consider the following 648-residue polypeptide: Acetyl-coenzyme A synthetase (648 aa).

Residues 190-193, Thr308, and Asn332 each bind CoA; that span reads RGGK. Residues 384–386, 408–413, Asp497, and Arg512 each bind ATP; these read GEP and DTWWQT. Ser520 contributes to the CoA binding site. Arg523 is a binding site for ATP. Val534, His536, and Val539 together coordinate Mg(2+). Residue Arg581 participates in CoA binding. Position 606 is an N6-acetyllysine (Lys606).

The protein belongs to the ATP-dependent AMP-binding enzyme family. The cofactor is Mg(2+). Post-translationally, acetylated. Deacetylation by the SIR2-homolog deacetylase activates the enzyme.

The enzyme catalyses acetate + ATP + CoA = acetyl-CoA + AMP + diphosphate. Functionally, catalyzes the conversion of acetate into acetyl-CoA (AcCoA), an essential intermediate at the junction of anabolic and catabolic pathways. AcsA undergoes a two-step reaction. In the first half reaction, AcsA combines acetate with ATP to form acetyl-adenylate (AcAMP) intermediate. In the second half reaction, it can then transfer the acetyl group from AcAMP to the sulfhydryl group of CoA, forming the product AcCoA. The protein is Acetyl-coenzyme A synthetase of Bradyrhizobium diazoefficiens (strain JCM 10833 / BCRC 13528 / IAM 13628 / NBRC 14792 / USDA 110).